The chain runs to 204 residues: Holliday junction branch migration complex subunit RuvA (204 aa).

The domain I stretch occupies residues 1-67 (MIGYLEGKIL…QPKPVLIGFN (67 aa)). The domain II stretch occupies residues 68–145 (SLEEREFFER…VFAGEHGGEP (78 aa)). The interval 146–156 (AGPAPVEENFH) is flexible linker. The segment at 156 to 204 (HLLVLDVLVNQLGHKAAEAKELINQAIKRNPAISSPEELFDEVYRGETG) is domain III.

This sequence belongs to the RuvA family. In terms of assembly, homotetramer. Forms an RuvA(8)-RuvB(12)-Holliday junction (HJ) complex. HJ DNA is sandwiched between 2 RuvA tetramers; dsDNA enters through RuvA and exits via RuvB. An RuvB hexamer assembles on each DNA strand where it exits the tetramer. Each RuvB hexamer is contacted by two RuvA subunits (via domain III) on 2 adjacent RuvB subunits; this complex drives branch migration. In the full resolvosome a probable DNA-RuvA(4)-RuvB(12)-RuvC(2) complex forms which resolves the HJ.

The protein localises to the cytoplasm. Its function is as follows. The RuvA-RuvB-RuvC complex processes Holliday junction (HJ) DNA during genetic recombination and DNA repair, while the RuvA-RuvB complex plays an important role in the rescue of blocked DNA replication forks via replication fork reversal (RFR). RuvA specifically binds to HJ cruciform DNA, conferring on it an open structure. The RuvB hexamer acts as an ATP-dependent pump, pulling dsDNA into and through the RuvAB complex. HJ branch migration allows RuvC to scan DNA until it finds its consensus sequence, where it cleaves and resolves the cruciform DNA. The chain is Holliday junction branch migration complex subunit RuvA from Desulfatibacillum aliphaticivorans.